A 150-amino-acid polypeptide reads, in one-letter code: D-aminoacyl-tRNA deacylase (150 aa).

The Gly-cisPro motif, important for rejection of L-amino acids motif lies at 140–141 (GP).

The protein belongs to the DTD family. As to quaternary structure, homodimer.

Its subcellular location is the cytoplasm. The enzyme catalyses glycyl-tRNA(Ala) + H2O = tRNA(Ala) + glycine + H(+). The catalysed reaction is a D-aminoacyl-tRNA + H2O = a tRNA + a D-alpha-amino acid + H(+). In terms of biological role, an aminoacyl-tRNA editing enzyme that deacylates mischarged D-aminoacyl-tRNAs. Also deacylates mischarged glycyl-tRNA(Ala), protecting cells against glycine mischarging by AlaRS. Acts via tRNA-based rather than protein-based catalysis; rejects L-amino acids rather than detecting D-amino acids in the active site. By recycling D-aminoacyl-tRNA to D-amino acids and free tRNA molecules, this enzyme counteracts the toxicity associated with the formation of D-aminoacyl-tRNA entities in vivo and helps enforce protein L-homochirality. In Kluyveromyces lactis (strain ATCC 8585 / CBS 2359 / DSM 70799 / NBRC 1267 / NRRL Y-1140 / WM37) (Yeast), this protein is D-aminoacyl-tRNA deacylase (DTD1).